Consider the following 133-residue polypeptide: UPF0102 protein CYA_0680 (133 aa).

The protein belongs to the UPF0102 family.

This Synechococcus sp. (strain JA-3-3Ab) (Cyanobacteria bacterium Yellowstone A-Prime) protein is UPF0102 protein CYA_0680.